A 368-amino-acid chain; its full sequence is Reverse transcriptase-like protein (368 aa).

A Reverse transcriptase domain is found at 91-318 (TRELTVPYWY…SELNWLGHKV (228 aa)).

It is found in the mitochondrion. The protein is Reverse transcriptase-like protein (RTL) of Chlamydomonas reinhardtii (Chlamydomonas smithii).